The chain runs to 193 residues: Imidazoleglycerol-phosphate dehydratase (193 aa).

It belongs to the imidazoleglycerol-phosphate dehydratase family.

Its subcellular location is the cytoplasm. It carries out the reaction D-erythro-1-(imidazol-4-yl)glycerol 3-phosphate = 3-(imidazol-4-yl)-2-oxopropyl phosphate + H2O. Its pathway is amino-acid biosynthesis; L-histidine biosynthesis; L-histidine from 5-phospho-alpha-D-ribose 1-diphosphate: step 6/9. In Methanoculleus marisnigri (strain ATCC 35101 / DSM 1498 / JR1), this protein is Imidazoleglycerol-phosphate dehydratase.